Reading from the N-terminus, the 372-residue chain is MKQESPIKRRKSRQIMVGNVPVGGDAPIAVQSMTNTNTCDVDATVTQIKAIQEAGADIVRVSVPSMEAAEAFGKIRQQVSLPLVADIHFDYKIALRVAELGVDCLRINPGNIGRDDRVSAVISAARDRNIPIRIGVNAGSLEKALQRKYGEPTPEALVESAMRHIDILDKHDFQDFKVSLKASEVFMTVAAYRLIASQIEQPLHLGITEAGGFRSGTVKSSIGLGMLLMDGIGDTIRVSLAADPVQEIKVGFDILKSLRLRSRGINFIACPSCSRQNFDVIQTMNDLEARLEDVNTSMDVAIIGCIVNGPGEAKVADIGLTGGTPKNLFYMAGKPNQKLDNATLVDDLERLIREEVSRREDQDSAVIAKSSD.

Residues Cys-270, Cys-273, Cys-305, and Glu-312 each coordinate [4Fe-4S] cluster.

The protein belongs to the IspG family. The cofactor is [4Fe-4S] cluster.

The enzyme catalyses (2E)-4-hydroxy-3-methylbut-2-enyl diphosphate + oxidized [flavodoxin] + H2O + 2 H(+) = 2-C-methyl-D-erythritol 2,4-cyclic diphosphate + reduced [flavodoxin]. Its pathway is isoprenoid biosynthesis; isopentenyl diphosphate biosynthesis via DXP pathway; isopentenyl diphosphate from 1-deoxy-D-xylulose 5-phosphate: step 5/6. Functionally, converts 2C-methyl-D-erythritol 2,4-cyclodiphosphate (ME-2,4cPP) into 1-hydroxy-2-methyl-2-(E)-butenyl 4-diphosphate. The protein is 4-hydroxy-3-methylbut-2-en-1-yl diphosphate synthase (flavodoxin) of Marinobacter nauticus (strain ATCC 700491 / DSM 11845 / VT8) (Marinobacter aquaeolei).